The following is a 638-amino-acid chain: ATP-dependent zinc metalloprotease FtsH (638 aa).

Residues 1 to 7 lie on the Cytoplasmic side of the membrane; sequence MRSTYKT. The chain crosses the membrane as a helical span at residues 8–28; that stretch reads IGLWVILIVLFVAFYNFFSQG. The Periplasmic segment spans residues 29–102; sequence NDQVQEPSFT…KYEREEQNSL (74 aa). Residues 103–123 form a helical membrane-spanning segment; it reads WLTILGQWMPVVFLFLFFIFF. At 124-638 the chain is on the cytoplasmic side; the sequence is MRQLQGGSGK…GLPAMEPKKA (515 aa). 195-202 contacts ATP; it reads GSPGTGKT. A Zn(2+)-binding site is contributed by histidine 417. The active site involves glutamate 418. Residues histidine 421 and aspartate 493 each coordinate Zn(2+). Residues 596 to 638 are disordered; it reads GGQLTRERPPPRVNAPPKATEKKDKRKILDALEGLPAMEPKKA. The span at 614-625 shows a compositional bias: basic and acidic residues; sequence ATEKKDKRKILD.

In the central section; belongs to the AAA ATPase family. It in the C-terminal section; belongs to the peptidase M41 family. In terms of assembly, homohexamer. It depends on Zn(2+) as a cofactor.

Its subcellular location is the cell inner membrane. Its function is as follows. Acts as a processive, ATP-dependent zinc metallopeptidase for both cytoplasmic and membrane proteins. Plays a role in the quality control of integral membrane proteins. The protein is ATP-dependent zinc metalloprotease FtsH of Myxococcus xanthus (strain DK1622).